Consider the following 380-residue polypeptide: Cytochrome b (380 aa).

Transmembrane regions (helical) follow at residues 34-54 (FGSL…FLAM), 78-99 (WLLR…YMHI), 114-134 (WNIG…GYVL), and 179-199 (FFAF…VHLL). Residues H84 and H98 each contribute to the heme b site. Heme b is bound by residues H183 and H197. H202 is an a ubiquinone binding site. 4 helical membrane passes run 227–247 (YKDV…ALFS), 289–309 (LGGV…PFVH), 321–341 (LAQV…WLGG), and 348–368 (YIFL…LFIP).

It belongs to the cytochrome b family. As to quaternary structure, the cytochrome bc1 complex contains 3 respiratory subunits (MT-CYB, CYC1 and UQCRFS1), 2 core proteins (UQCRC1 and UQCRC2) and probably 6 low-molecular weight proteins. The cofactor is heme b.

It localises to the mitochondrion inner membrane. Functionally, component of the ubiquinol-cytochrome c reductase complex (complex III or cytochrome b-c1 complex) that is part of the mitochondrial respiratory chain. The b-c1 complex mediates electron transfer from ubiquinol to cytochrome c. Contributes to the generation of a proton gradient across the mitochondrial membrane that is then used for ATP synthesis. In Branchiostoma lanceolatum (Common lancelet), this protein is Cytochrome b (MT-CYB).